A 464-amino-acid polypeptide reads, in one-letter code: Protein FAM90A1 (464 aa).

Disordered stretches follow at residues Met-1–Lys-43, Pro-71–Ala-294, Pro-312–His-386, Pro-412–Pro-437, and Val-445–Glu-464. Composition is skewed to basic and acidic residues over residues Gly-74–Lys-83 and Asn-97–Arg-114. Residues Leu-180 to Leu-197 show a composition bias toward low complexity. Over residues Thr-344–Gln-355 the composition is skewed to polar residues.

This sequence belongs to the FAM90 family.

The chain is Protein FAM90A1 (FAM90A1) from Homo sapiens (Human).